The sequence spans 348 residues: Dihydroorotase (348 aa).

Residues H13 and H15 each contribute to the Zn(2+) site. Substrate-binding positions include 15-17 (HLR) and N41. 3 residues coordinate Zn(2+): K99, H136, and H174. The residue at position 99 (K99) is an N6-carboxylysine. H136 contributes to the substrate binding site. L219 contributes to the substrate binding site. Residue D247 coordinates Zn(2+). Residue D247 is part of the active site. Residues H251 and A263 each contribute to the substrate site.

The protein belongs to the metallo-dependent hydrolases superfamily. DHOase family. Class II DHOase subfamily. Homodimer. It depends on Zn(2+) as a cofactor.

The catalysed reaction is (S)-dihydroorotate + H2O = N-carbamoyl-L-aspartate + H(+). It functions in the pathway pyrimidine metabolism; UMP biosynthesis via de novo pathway; (S)-dihydroorotate from bicarbonate: step 3/3. Catalyzes the reversible cyclization of carbamoyl aspartate to dihydroorotate. In Coxiella burnetii (strain RSA 331 / Henzerling II), this protein is Dihydroorotase.